The sequence spans 177 residues: Large ribosomal subunit protein uL6 (177 aa).

Belongs to the universal ribosomal protein uL6 family. Part of the 50S ribosomal subunit.

This protein binds to the 23S rRNA, and is important in its secondary structure. It is located near the subunit interface in the base of the L7/L12 stalk, and near the tRNA binding site of the peptidyltransferase center. The protein is Large ribosomal subunit protein uL6 of Vibrio vulnificus (strain CMCP6).